The chain runs to 274 residues: Large ribosomal subunit protein uL2 (274 aa).

The tract at residues 223–274 (VAMNPVDHPMGGGEGKASGGHPRSRTGLYAKGKKTRNTNKYSKNYILSRKKR) is disordered.

It belongs to the universal ribosomal protein uL2 family. Part of the 50S ribosomal subunit. Forms a bridge to the 30S subunit in the 70S ribosome.

Its function is as follows. One of the primary rRNA binding proteins. Required for association of the 30S and 50S subunits to form the 70S ribosome, for tRNA binding and peptide bond formation. It has been suggested to have peptidyltransferase activity; this is somewhat controversial. Makes several contacts with the 16S rRNA in the 70S ribosome. In Amoebophilus asiaticus (strain 5a2), this protein is Large ribosomal subunit protein uL2.